A 193-amino-acid polypeptide reads, in one-letter code: Inner membrane protein p54 (193 aa).

Residues Y32–F52 form a helical membrane-spanning segment. Positions P84–R126 are disordered. Repeat copies occupy residues A135 to S138, A139 to S142, A143 to S146, and A147 to S150. The segment at A135 to S150 is 4 X 4 AA tandem repeats of A-A-A-S. Positions Y159–T171 are interaction with host DYNLL1.

This sequence belongs to the asfivirus envelope protein p54 family. Interacts with the host light chain cytoplasmic dynein DYNLL1; this interaction is critical for intracellular microtubule-dependent virus transport toward viral factories.

It localises to the virion membrane. Its subcellular location is the host cytoplasm. The protein localises to the host cytoskeleton. The protein resides in the host endoplasmic reticulum membrane. In terms of biological role, inner envelope protein involved, through its interaction with host dynein, in the intracellular microtubule-dependent transport of viral capsid toward viral factories. Seems to induce caspase-3 activation and apoptosis. Plays a role in virion morphogenesis by recruiting and transforming the host ER membranes into the precursors of the viral envelope. Involved in virus attachment to the host cell. This Ornithodoros (relapsing fever ticks) protein is Inner membrane protein p54.